Consider the following 406-residue polypeptide: Beta-galactoside alpha-2,6-sialyltransferase 1 (406 aa).

Residues 1–9 (MIHTNLKKK) lie on the Cytoplasmic side of the membrane. A helical; Signal-anchor for type II membrane protein transmembrane segment spans residues 10 to 26 (FSCCVLVFLLFAVICVW). At 27 to 406 (KEKKKGSYYD…TLPGFRTIHC (380 aa)) the chain is on the lumenal side. 3 disulfide bridges follow: cysteine 142–cysteine 406, cysteine 184–cysteine 335, and cysteine 353–cysteine 364. Residues asparagine 149 and asparagine 161 are each glycosylated (N-linked (GlcNAc...) asparagine). Substrate contacts are provided by residues serine 189, asparagine 212, asparagine 233, 322-324 (SSG), cysteine 353, tyrosine 354, threonine 365, tyrosine 369, histidine 370, and lysine 376. Tyrosine 369 carries the phosphotyrosine modification.

The protein belongs to the glycosyltransferase 29 family. As to quaternary structure, monomer and homodimer. N-glycosylated.

The protein resides in the golgi apparatus. It is found in the golgi stack membrane. The protein localises to the secreted. The enzyme catalyses a beta-D-galactoside + CMP-N-acetyl-beta-neuraminate = an N-acetyl-alpha-neuraminyl-(2-&gt;6)-beta-D-galactosyl derivative + CMP + H(+). It functions in the pathway protein modification; protein glycosylation. With respect to regulation, inhibited by CTP. In terms of biological role, transfers sialic acid from CMP-sialic acid to galactose-containing acceptor substrates. In B lymphocytes, generates neuraminidase-sensitive lymphocyte cell-surface differentiation antigens, such as CDw75, HB-6 and CD76. In Homo sapiens (Human), this protein is Beta-galactoside alpha-2,6-sialyltransferase 1 (ST6GAL1).